A 166-amino-acid polypeptide reads, in one-letter code: Keratin, type II cytoskeletal 68 kDa, component IB (166 aa).

The IF rod domain occupies 1-41; sequence EAKDDLARLLRDYQDAMNVKLALDVEIATYRKLLEGEECRM. The interval 1-41 is coil 2B; it reads EAKDDLARLLRDYQDAMNVKLALDVEIATYRKLLEGEECRM. Residues 42 to 166 form a tail region; the sequence is SGECPSAVSI…FSQSSQRTSR (125 aa). Gly residues predominate over residues 122-146; it reads GFGGGSSGFGSGSGGRSGVSGGGLS. A disordered region spans residues 122–166; it reads GFGGGSSGFGSGSGGRSGVSGGGLSSGSSRGGSVRFSQSSQRTSR. Low complexity predominate over residues 147–166; sequence SGSSRGGSVRFSQSSQRTSR.

The protein belongs to the intermediate filament family. As to quaternary structure, heterotetramer of two type I and two type II keratins.

In Bos taurus (Bovine), this protein is Keratin, type II cytoskeletal 68 kDa, component IB.